Reading from the N-terminus, the 854-residue chain is Nucleolar MIF4G domain-containing protein 1 (854 aa).

The interval 2–275 (PRNVPEVNGV…EEDPDWQVLQ (274 aa)) is necessary for nucleolar localization and for targeting PPP1CA to the nucleolus. Phosphoserine is present on Ser-60. Disordered regions lie at residues 66–215 (ESRS…PLSF) and 231–333 (SGGG…GEKY). Basic residues predominate over residues 76–99 (PGGRKSRKELRKEKRHLRKARRLQ). A compositionally biased stretch (gly residues) spans 104-113 (SGSGDQGGNV). A compositionally biased stretch (low complexity) spans 128–173 (VRPTPAKATATPAKASAPSTNTKASAAQPKAKAKGAPGKPGPATAT). Residues 188–197 (REIRKLERCL) are compositionally biased toward basic and acidic residues. A compositionally biased stretch (acidic residues) spans 265–280 (SEEDPDWQVLQEDQED). Composition is skewed to basic and acidic residues over residues 281–291 (VNSKRRGEAES), 303–315 (RFAE…RSSS), and 322–331 (QESHSVESGE). A Required for efficient binding to PPP1CA and for targeting PPP1CA to the nucleolus motif is present at residues 301-304 (KVRF). A phosphoserine mark is found at Ser-311, Ser-314, and Ser-315. An MIF4G domain is found at 356–553 (KKHVKGLINR…ETMLALKNND (198 aa)). The MI domain maps to 648-764 (DVRRIIFCTL…PLSVLKVVEF (117 aa)).

It belongs to the CWC22 family. In terms of assembly, may interact with EIF4A1, EIF4A2 and EIF4A3. Interacts with PPP1CA and PPP1CC.

The protein resides in the nucleus. It is found in the nucleolus. Functionally, plays a role in targeting PPP1CA to the nucleolus. The sequence is that of Nucleolar MIF4G domain-containing protein 1 (Nom1) from Mus musculus (Mouse).